Consider the following 188-residue polypeptide: GMP synthase [glutamine-hydrolyzing] subunit A (188 aa).

The 187-residue stretch at 2 to 188 (KIYIIDNGGQ…FKNFIEKCRR (187 aa)) folds into the Glutamine amidotransferase type-1 domain. The active-site Nucleophile is C79. Catalysis depends on residues H166 and E168.

In terms of assembly, heterodimer composed of a glutamine amidotransferase subunit (A) and a GMP-binding subunit (B).

It catalyses the reaction XMP + L-glutamine + ATP + H2O = GMP + L-glutamate + AMP + diphosphate + 2 H(+). It participates in purine metabolism; GMP biosynthesis; GMP from XMP (L-Gln route): step 1/1. Its function is as follows. Catalyzes the synthesis of GMP from XMP. The protein is GMP synthase [glutamine-hydrolyzing] subunit A of Picrophilus torridus (strain ATCC 700027 / DSM 9790 / JCM 10055 / NBRC 100828 / KAW 2/3).